We begin with the raw amino-acid sequence, 399 residues long: L-asparaginase-like protein GE13669 (399 aa).

Positions 1–22 (MLAQSCCLRLLILLLLFKSTCS) are cleaved as a signal peptide. 3 disulfide bridges follow: cysteine 90–cysteine 95, cysteine 189–cysteine 205, and cysteine 344–cysteine 371.

This sequence belongs to the Ntn-hydrolase family.

The chain is L-asparaginase-like protein GE13669 from Drosophila yakuba (Fruit fly).